We begin with the raw amino-acid sequence, 602 residues long: ATP-dependent RNA helicase DeaD (602 aa).

The Q motif motif lies at 6–34 (MTFSSFGLNSCIITALNDIGYVQPSPIQA). The region spanning 37 to 208 (IPYLIKGKDV…RRFMKNPKEI (172 aa)) is the Helicase ATP-binding domain. ATP is bound at residue 50-57 (AQTGSGKT). The short motif at 156-159 (DEAD) is the DEAD box element. In terms of domain architecture, Helicase C-terminal spans 231–378 (KTDALIRFLE…EVNLPKSDFL (148 aa)).

The protein belongs to the DEAD box helicase family. DeaD/CsdA subfamily.

It localises to the cytoplasm. It carries out the reaction ATP + H2O = ADP + phosphate + H(+). In terms of biological role, DEAD-box RNA helicase involved in various cellular processes at low temperature, including ribosome biogenesis, mRNA degradation and translation initiation. In Buchnera aphidicola subsp. Baizongia pistaciae (strain Bp), this protein is ATP-dependent RNA helicase DeaD.